The chain runs to 133 residues: MVPSAGQLALFALGIFLAVCQALENSTSALSDPPVAAAVVSHFNDCPDSHTQFCFHGTCRFLLQEEKPACVCHSGYVGARCEHADLLAVVAASQKKQAITALVVVTIVALAVLIITCVLIHCCEVRKHSVVVP.

A signal peptide spans 1-23 (MVPSAGQLALFALGIFLAVCQAL). The propeptide at 24 to 38 (ENSTSALSDPPVAAA) is removed in mature form. Over 24 to 97 (ENSTSALSDP…AVVAASQKKQ (74 aa)) the chain is Extracellular. A glycan (N-linked (GlcNAc...) asparagine) is linked at N25. An EGF-like domain is found at 42-82 (HFNDCPDSHTQFCFHGTCRFLLQEEKPACVCHSGYVGARCE). 3 disulfides stabilise this stretch: C46-C59, C54-C70, and C72-C81. A propeptide spans 89 to 133 (VVAASQKKQAITALVVVTIVALAVLIITCVLIHCCEVRKHSVVVP) (removed in mature form). The helical transmembrane segment at 98–120 (AITALVVVTIVALAVLIITCVLI) threads the bilayer. Over 121-133 (HCCEVRKHSVVVP) the chain is Cytoplasmic.

Interacts with the PDZ domains of MAGI3, SDCBP and SNTA1. The interaction with SDCBP, is required for the targeting to the cell surface. In the endoplasmic reticulum, in its immature form (i.e. with a prosegment and lacking full N-glycosylation), interacts with CNIH. In the Golgi apparatus, may form a complex with CNIH and GORASP2. Interacts (via cytoplasmic C-terminal domain) with NKD2. Skin.

The protein resides in the secreted. It localises to the extracellular space. It is found in the cell membrane. Functionally, TGF alpha is a mitogenic polypeptide that is able to bind to the EGF receptor/EGFR and to act synergistically with TGF beta to promote anchorage-independent cell proliferation in soft agar. The chain is Protransforming growth factor alpha (TGFA) from Ovis aries (Sheep).